The primary structure comprises 350 residues: Leucine-rich repeat-containing protein 23 (350 aa).

Acidic residues predominate over residues 1–54 (MEDETLEDGPEEEEEDEEEGTAEETNQDVTERDEEEEAEKDEEEDKEEEEEAEK). Residues 1-64 (MEDETLEDGP…EEPPPHMPLS (64 aa)) are disordered. 8 LRR repeats span residues 107 to 128 (HLRY…GALT), 129 to 150 (HLLS…GELP), 151 to 171 (YLQV…FGHP), 172 to 193 (RLET…ECSN), 196 to 216 (SLHT…LNLP), 217 to 238 (SLRE…EALV), 239 to 260 (NLTT…SEHL), and 262 to 283 (ALQY…QKLY). Positions 296–334 (NPCEEEEGYRMETLIALPQLERLDKDFFEEEEKREAAET) constitute an LRRCT domain. The stretch at 314–344 (QLERLDKDFFEEEEKREAAETKKAREEEMAE) forms a coiled coil. Residues 325 to 350 (EEEKREAAETKKAREEEMAEPGEKGN) are disordered.

The protein localises to the cytoplasm. Its subcellular location is the cytoskeleton. The protein resides in the flagellum axoneme. This chain is Leucine-rich repeat-containing protein 23 (lrrc23), found in Xenopus tropicalis (Western clawed frog).